The primary structure comprises 542 residues: Doublesex- and mab-3-related transcription factor A2 (542 aa).

The DM DNA-binding region spans 70-117; the sequence is CARCRNHGVVSALKGHKRYCRWKDCLCAKCTLIAERQRVMAAQVALRR. Residues 201 to 316 form a disordered region; sequence LQAGRPGSPL…GGSGPRQRTP (116 aa). The 36-residue stretch at 314–349 folds into the DMA domain; it reads RTPLDILTRVFPGHRRGVLELVLQGCGGDVVQAIEQ.

Belongs to the DMRT family. As to expression, expressed in testis.

The protein resides in the nucleus. Functionally, may be involved in sexual development. This is Doublesex- and mab-3-related transcription factor A2 (DMRTA2) from Homo sapiens (Human).